The chain runs to 104 residues: Pyrimidine/purine nucleoside phosphorylase (104 aa).

The protein belongs to the nucleoside phosphorylase PpnP family.

It catalyses the reaction a purine D-ribonucleoside + phosphate = a purine nucleobase + alpha-D-ribose 1-phosphate. The enzyme catalyses adenosine + phosphate = alpha-D-ribose 1-phosphate + adenine. The catalysed reaction is cytidine + phosphate = cytosine + alpha-D-ribose 1-phosphate. It carries out the reaction guanosine + phosphate = alpha-D-ribose 1-phosphate + guanine. It catalyses the reaction inosine + phosphate = alpha-D-ribose 1-phosphate + hypoxanthine. The enzyme catalyses thymidine + phosphate = 2-deoxy-alpha-D-ribose 1-phosphate + thymine. The catalysed reaction is uridine + phosphate = alpha-D-ribose 1-phosphate + uracil. It carries out the reaction xanthosine + phosphate = alpha-D-ribose 1-phosphate + xanthine. Functionally, catalyzes the phosphorolysis of diverse nucleosides, yielding D-ribose 1-phosphate and the respective free bases. Can use uridine, adenosine, guanosine, cytidine, thymidine, inosine and xanthosine as substrates. Also catalyzes the reverse reactions. The chain is Pyrimidine/purine nucleoside phosphorylase from Geotalea uraniireducens (strain Rf4) (Geobacter uraniireducens).